The chain runs to 301 residues: MSPEEIKSRVGSGLLSFPVTHFTSDYKLNLESYRRHVEWLSGFEAAALFAAGGTGEFFSLSPNEVGQVTRAAKDVSGEVPIIAGCGYGTSLAVETAKIVEEAGADGILLLPHYLTEAPQEGIYAHVKAVCDSTGLGVILYNRANSVANADTVARLAEACPNLIGFKDGTGKVDLVRHVTAKLGDRLCYIGGMPTHELFAEGFNGVGVTTYSSAVFNFVPELAQRFYRAMRAGDRAVMEGILHTFFFPFAALRDRKAGYPVSIIKAGVELAGFAPGPVRPPLVDLTGEEREILQGLIEASRR.

This sequence belongs to the DapA family.

It carries out the reaction 5-dehydro-4-deoxy-D-glucarate + H(+) = 2,5-dioxopentanoate + CO2 + H2O. It participates in carbohydrate acid metabolism; D-glucarate degradation; 2,5-dioxopentanoate from D-glucarate: step 2/2. This is Probable 5-dehydro-4-deoxyglucarate dehydratase from Rhizobium meliloti (strain 1021) (Ensifer meliloti).